The chain runs to 249 residues: MKFDILTLFPAMFEGPLTESILKRASDKGLIEVALHNIRDWAFDKHATADDAPYGGGAGMVMKVEPIAGAIEAVKAKNPNSKVILTTPCGRPFNHQFAEELSREEGVVIICGRYEGVDERVRTLFVDDEISLGDFVLTGGEIAAMVIVDAVSRLVPGVLGSDESAQYDSFADGLLEYPQYTRPPEFRGEKVPDILLSGNHAEIAKWRRKEQMRRTLASRPELLDGIEWSKSDKKLFVEVEKANQEKVAR.

Residues glycine 112 and 132–137 (LGDFVL) each bind S-adenosyl-L-methionine.

It belongs to the RNA methyltransferase TrmD family. In terms of assembly, homodimer.

The protein localises to the cytoplasm. It carries out the reaction guanosine(37) in tRNA + S-adenosyl-L-methionine = N(1)-methylguanosine(37) in tRNA + S-adenosyl-L-homocysteine + H(+). Its function is as follows. Specifically methylates guanosine-37 in various tRNAs. The sequence is that of tRNA (guanine-N(1)-)-methyltransferase from Citrifermentans bemidjiense (strain ATCC BAA-1014 / DSM 16622 / JCM 12645 / Bem) (Geobacter bemidjiensis).